The following is a 136-amino-acid chain: Protein NrdI (136 aa).

It belongs to the NrdI family.

Its function is as follows. Probably involved in ribonucleotide reductase function. The protein is Protein NrdI of Klebsiella pneumoniae (strain 342).